The following is a 283-amino-acid chain: Pantothenate synthetase (283 aa).

26-33 (MGNLHDGH) is an ATP binding site. His-33 acts as the Proton donor in catalysis. Gln-57 is a (R)-pantoate binding site. Residue Gln-57 coordinates beta-alanine. 148-151 (GKKD) provides a ligand contact to ATP. Gln-154 lines the (R)-pantoate pocket. Residues Ala-177 and 185-188 (LSSR) contribute to the ATP site.

Belongs to the pantothenate synthetase family. As to quaternary structure, homodimer.

Its subcellular location is the cytoplasm. The enzyme catalyses (R)-pantoate + beta-alanine + ATP = (R)-pantothenate + AMP + diphosphate + H(+). It participates in cofactor biosynthesis; (R)-pantothenate biosynthesis; (R)-pantothenate from (R)-pantoate and beta-alanine: step 1/1. Catalyzes the condensation of pantoate with beta-alanine in an ATP-dependent reaction via a pantoyl-adenylate intermediate. In Delftia acidovorans (strain DSM 14801 / SPH-1), this protein is Pantothenate synthetase.